The sequence spans 141 residues: Large ribosomal subunit protein uL11 (141 aa).

It belongs to the universal ribosomal protein uL11 family. In terms of assembly, part of the ribosomal stalk of the 50S ribosomal subunit. Interacts with L10 and the large rRNA to form the base of the stalk. L10 forms an elongated spine to which L12 dimers bind in a sequential fashion forming a multimeric L10(L12)X complex. In terms of processing, one or more lysine residues are methylated.

Its function is as follows. Forms part of the ribosomal stalk which helps the ribosome interact with GTP-bound translation factors. In Syntrophomonas wolfei subsp. wolfei (strain DSM 2245B / Goettingen), this protein is Large ribosomal subunit protein uL11.